The following is a 129-amino-acid chain: Serum amyloid A protein (129 aa).

A signal peptide spans 1–18 (MKLFTGLVFCSLVLGVSS). Gln-19 bears the Pyrrolidone carboxylic acid mark. Positions 88–129 (FFRHGNSGHGAEDSKADQAANEWGRSGKDPNHFRPAGLPSKY) are disordered. A propeptide spans 112–129 (RSGKDPNHFRPAGLPSKY) (often cleaved during amyloidogenesis).

This sequence belongs to the SAA family. Expressed by the liver; secreted in plasma.

It is found in the secreted. Functionally, major acute phase reactant. Apolipoprotein of the HDL complex. In Felis catus (Cat), this protein is Serum amyloid A protein (SAA1).